We begin with the raw amino-acid sequence, 274 residues long: Acetyl-coenzyme A carboxylase carboxyl transferase subunit beta (274 aa).

Residues 18–274 (IWTKCKKCDY…FYNRQCFLKF (257 aa)) form the CoA carboxyltransferase N-terminal domain. The Zn(2+) site is built by Cys22, Cys25, Cys41, and Cys44. The segment at 22 to 44 (CKKCDYILLQKDFEENLMVCPKC) adopts a C4-type zinc-finger fold.

This sequence belongs to the AccD/PCCB family. As to quaternary structure, acetyl-CoA carboxylase is a heterohexamer composed of biotin carboxyl carrier protein (AccB), biotin carboxylase (AccC) and two subunits each of ACCase subunit alpha (AccA) and ACCase subunit beta (AccD). The cofactor is Zn(2+).

Its subcellular location is the cytoplasm. It catalyses the reaction N(6)-carboxybiotinyl-L-lysyl-[protein] + acetyl-CoA = N(6)-biotinyl-L-lysyl-[protein] + malonyl-CoA. Its pathway is lipid metabolism; malonyl-CoA biosynthesis; malonyl-CoA from acetyl-CoA: step 1/1. Functionally, component of the acetyl coenzyme A carboxylase (ACC) complex. Biotin carboxylase (BC) catalyzes the carboxylation of biotin on its carrier protein (BCCP) and then the CO(2) group is transferred by the transcarboxylase to acetyl-CoA to form malonyl-CoA. The polypeptide is Acetyl-coenzyme A carboxylase carboxyl transferase subunit beta (Endomicrobium trichonymphae).